We begin with the raw amino-acid sequence, 277 residues long: Outer membrane lipoprotein 1 (277 aa).

A signal peptide spans 1-19 (MSFKKILGVALVSALALTA). A lipid anchor (N-palmitoyl cysteine) is attached at C20. C20 carries S-diacylglycerol cysteine lipidation.

This sequence belongs to the NlpA lipoprotein family.

The protein localises to the cell outer membrane. This Mannheimia haemolytica (Pasteurella haemolytica) protein is Outer membrane lipoprotein 1 (plpA).